The primary structure comprises 545 residues: Tetrahydrocannabinolic acid synthase (545 aa).

Positions 1–28 (MNCSAFSFWFVCKIIFFFLSFHIQISIA) are cleaved as a signal peptide. C37 and C99 form a disulfide bridge. N65 and N89 each carry an N-linked (GlcNAc...) asparagine glycan. The FAD-binding PCMH-type domain maps to 77–251 (TTPKPLVIVT…AAWKIKLVAV (175 aa)). Residues 109–115 (TRSGGHD) and S120 contribute to the FAD site. The 6-(S-cysteinyl)-8alpha-(pros-histidyl)-FAD (His-Cys) cross-link spans 114 to 176 (HDAEGMSYIS…ENLSFPGGYC (63 aa)). N168 is a glycosylation site (N-linked (GlcNAc...) asparagine). FAD contacts are provided by residues C176, 180–184 (GVGGH), Y190, E236, and I241. Position 292 (H292) interacts with cannabigerolate. Residues N297, N305, and N329 are each glycosylated (N-linked (GlcNAc...) asparagine). Residues Y417 and E442 each coordinate cannabigerolate. N467 is a glycosylation site (N-linked (GlcNAc...) asparagine). 481–483 (YLN) contacts FAD. Y484 (proton acceptor) is an active-site residue. The N-linked (GlcNAc...) asparagine glycan is linked to N499.

Belongs to the oxygen-dependent FAD-linked oxidoreductase family. In terms of assembly, monomer. Requires FAD as cofactor. In terms of processing, glycosylated when produced in a heterologous system. The deglycosylated THCA synthase has more catalytic activity than the glycosylated form. The FAD cofactor is bound via a bicovalent 6-S-cysteinyl, 8alpha-N1-histidyl FAD linkage. As to expression, expressed in the secretory cells of glandular trichomes.

Its subcellular location is the secreted. It is found in the extracellular space. It localises to the apoplast. The catalysed reaction is cannabigerolate + O2 = Delta(9)-tetrahydrocannabinolate + H2O2. The protein operates within secondary metabolite biosynthesis; terpenoid biosynthesis. Its activity is regulated as follows. Inhibited by Hg(2+). Its function is as follows. Oxidoreductase involved in the biosynthesis of cannabinoids-related terpenophenolic natural products, which have pharmacological activity. Catalyzes the oxidative cyclization of the monoterpene moiety in cannabigerolic acid (CBGA), producing delta(9)-tetrahydrocannabinolate (THCA), the major cannabioid in drug-type Cannabis plants. Can also use cannabinerolic acid as substrate, but not cannabigerol or cannabinerol. In Cannabis sativa (Hemp), this protein is Tetrahydrocannabinolic acid synthase.